The sequence spans 355 residues: Galectin-9 (355 aa).

Galectin domains lie at 17-148 (FSGT…ISFQ) and 227-355 (FITT…HVQT). A beta-D-galactoside-binding positions include Asn48, His61, Arg65, Asn75, 82-88 (WGPEERK), His267, Arg271, Thr281, and 287-293 (WGSEERS).

In terms of assembly, monomer. As to expression, peripheral blood leukocytes and lymphatic tissues. Expressed in lung, liver, breast and kidney with higher levels in tumor endothelial cells than normal endothelium (at protein level). Expressed in trophoblast cells in decidua and placenta in pregnancy (at protein level). Isoform 2 is the most abundant isoform expressed in endothelial cells. Upon endothelial cell activation isoform 2 expression decreases while expression of isoform 3 and isoform 5 increases. Isoform 4 decreases in pathological pregnancy.

Its subcellular location is the cytoplasm. The protein resides in the nucleus. The protein localises to the secreted. In terms of biological role, binds galactosides. Has high affinity for the Forssman pentasaccharide. Ligand for HAVCR2/TIM3. Binding to HAVCR2 induces T-helper type 1 lymphocyte (Th1) death. Also stimulates bactericidal activity in infected macrophages by causing macrophage activation and IL1B secretion which restricts intracellular bacterial growth. Ligand for P4HB; the interaction retains P4HB at the cell surface of Th2 T-helper cells, increasing disulfide reductase activity at the plasma membrane, altering the plasma membrane redox state and enhancing cell migration. Ligand for CD44; the interaction enhances binding of SMAD3 to the FOXP3 promoter, leading to up-regulation of FOXP3 expression and increased induced regulatory T (iTreg) cell stability and suppressive function. Promotes ability of mesenchymal stromal cells to suppress T-cell proliferation. Expands regulatory T-cells and induces cytotoxic T-cell apoptosis following virus infection. Activates ERK1/2 phosphorylation inducing cytokine (IL-6, IL-8, IL-12) and chemokine (CCL2) production in mast and dendritic cells. Inhibits degranulation and induces apoptosis of mast cells. Induces maturation and migration of dendritic cells. Inhibits natural killer (NK) cell function. Can transform NK cell phenotype from peripheral to decidual during pregnancy. Astrocyte derived galectin-9 enhances microglial TNF production. May play a role in thymocyte-epithelial interactions relevant to the biology of the thymus. May provide the molecular basis for urate flux across cell membranes, allowing urate that is formed during purine metabolism to efflux from cells and serving as an electrogenic transporter that plays an important role in renal and gastrointestinal urate excretion. Highly selective to the anion urate. Its function is as follows. Acts as an eosinophil chemoattractant. It also inhibits angiogenesis. Suppresses IFNG production by natural killer cells. This is Galectin-9 (LGALS9) from Homo sapiens (Human).